The following is a 432-amino-acid chain: Protein prenyltransferase alpha subunit repeat-containing protein 1-A (432 aa).

6 PFTA repeats span residues Glu-86–Pro-119, Lys-121–Leu-154, Glu-179–Lys-212, Asp-218–Thr-251, Glu-294–Leu-327, and Ser-395–His-432.

The protein belongs to the protein prenyltransferase subunit alpha family.

The sequence is that of Protein prenyltransferase alpha subunit repeat-containing protein 1-A (ptar1-a) from Xenopus laevis (African clawed frog).